A 536-amino-acid polypeptide reads, in one-letter code: MLLSQNVSAIGPLNLYPMVHISLVFGISYVVPDLSDESCTLKMRFRNFQSILSWELKNRSIVPTHYTLWYTIMSKPEDMKVVKDCINITRSFCDLTDVWVNRTDMYISQVVGYRENAVVVSCMGSFFLASDKPLDPPKFEIVDFTNNISVNVKFRLDSPRIPSEELQFYLAFIEEHAGNSVKRHQPQITGNITENFNYVIDKLIPNTNYCISVYFEPKDPRKINRSPLKCILFRPRRESESSEPATIGGILILFLLAAVCISTVMILKRIGYICLRNDFPEALNFYKLSVWVFPELPPLEKMATVEVIHITRKKKEWNYNYDDESDIENEVAPRVNSGGYTKHGLTGRLCPTSTTAASLEDCSLEDCSLEDCSDPSAEEPYLPEPKRDAETPAAPGPGPWQSEGTGGGYQTRGTLWQDPTSEEDSDSTEGSEGRIVFNVNLNSVCVRALEDDKDSEVTLMSPSPPEETAVLEEDLSETESSLLVASEEGTQLPFTDPSMECLRPQDALSDKSDTSESDVDIGDGYIVRQVNLKNFN.

The first 26 residues, 1–26, serve as a signal peptide directing secretion; sequence MLLSQNVSAIGPLNLYPMVHISLVFG. The Extracellular segment spans residues 27 to 246; sequence ISYVVPDLSD…RESESSEPAT (220 aa). 2 disulfide bridges follow: cysteine 39-cysteine 122 and cysteine 85-cysteine 93. N-linked (GlcNAc...) asparagine glycans are attached at residues asparagine 58, asparagine 87, asparagine 101, asparagine 147, and asparagine 191. Cysteines 210 and 230 form a disulfide. The chain crosses the membrane as a helical span at residues 247–267; it reads IGGILILFLLAAVCISTVMIL. Topologically, residues 268–536 are cytoplasmic; that stretch reads KRIGYICLRN…VRQVNLKNFN (269 aa). Tyrosine 340 carries the phosphotyrosine modification. A run of 3 repeats spans residues 358–362, 363–367, and 368–372. Residues 358 to 372 form a 3 X 5 AA tandem repeats of S-L-E-D-C region; the sequence is SLEDCSLEDCSLEDC. The disordered stretch occupies residues 369–434; that stretch reads LEDCSDPSAE…SDSTEGSEGR (66 aa). Positions 420-429 are enriched in acidic residues; it reads TSEEDSDSTE. The interval 432 to 456 is mediates interaction with STAT2 (and required for the recruitment of USP18); that stretch reads EGRIVFNVNLNSVCVRALEDDKDSE. Phosphoserine is present on serine 480. The segment at 487 to 522 is disordered; sequence EEGTQLPFTDPSMECLRPQDALSDKSDTSESDVDIG. At tyrosine 525 the chain carries Phosphotyrosine.

This sequence belongs to the type II cytokine receptor family. As to quaternary structure, heterodimer with IFNAR1; forming the receptor for type I interferon. Interacts with the transcriptional factors STAT1 and STAT2. Interacts with JAK1. Interacts with USP18; indirectly via STAT2, it negatively regulates the assembly of the ternary interferon-IFNAR1-IFNAR2 complex and therefore type I interferon signaling. Phosphorylated on tyrosine residues upon interferon binding. Phosphorylation at Tyr-340 or Tyr-525 are sufficient to mediate interferon dependent activation of STAT1, STAT2 and STAT3 leading to antiproliferative effects on many different cell types. In terms of tissue distribution, expressed in the endometrium. Expressed in all tissues examined except conceptus at day 15 of pregnancy.

Its subcellular location is the cell membrane. Together with IFNAR1, forms the heterodimeric receptor for type I interferons (including interferons alpha, beta, epsilon, omega and kappa). Type I interferon binding activates the JAK-STAT signaling cascade, resulting in transcriptional activation or repression of interferon-regulated genes that encode the effectors of the interferon response. Mechanistically, type I interferon-binding brings the IFNAR1 and IFNAR2 subunits into close proximity with one another, driving their associated Janus kinases (JAKs) (TYK2 bound to IFNAR1 and JAK1 bound to IFNAR2) to cross-phosphorylate one another. The activated kinases phosphorylate specific tyrosine residues on the intracellular domains of IFNAR1 and IFNAR2, forming docking sites for the STAT transcription factors (STAT1, STAT2 and STAT). STAT proteins are then phosphorylated by the JAKs, promoting their translocation into the nucleus to regulate expression of interferon-regulated genes. The sequence is that of Interferon alpha/beta receptor 2 (IFNAR2) from Ovis aries (Sheep).